We begin with the raw amino-acid sequence, 360 residues long: DNA replication and repair protein RecF (360 aa).

Position 30–37 (30–37 (GQNGSGKT)) interacts with ATP.

The protein belongs to the RecF family.

Its subcellular location is the cytoplasm. In terms of biological role, the RecF protein is involved in DNA metabolism; it is required for DNA replication and normal SOS inducibility. RecF binds preferentially to single-stranded, linear DNA. It also seems to bind ATP. This Shewanella baltica (strain OS155 / ATCC BAA-1091) protein is DNA replication and repair protein RecF.